A 370-amino-acid polypeptide reads, in one-letter code: Probable trehalose-phosphate phosphatase 6 (370 aa).

It belongs to the trehalose phosphatase family. The cofactor is a divalent metal cation.

The enzyme catalyses alpha,alpha-trehalose 6-phosphate + H2O = alpha,alpha-trehalose + phosphate. The protein operates within glycan biosynthesis; trehalose biosynthesis. Functionally, removes the phosphate from trehalose 6-phosphate to produce free trehalose. Trehalose accumulation in plant may improve abiotic stress tolerance. In Oryza sativa subsp. japonica (Rice), this protein is Probable trehalose-phosphate phosphatase 6 (TPP6).